Consider the following 137-residue polypeptide: Small ribosomal subunit protein uS9 (137 aa).

The interval 105-137 is disordered; sequence LKAEGYLTRDPRAKERKKYGLHKARKAPQYSKR. The segment covering 118–137 has biased composition (basic residues); the sequence is KERKKYGLHKARKAPQYSKR.

It belongs to the universal ribosomal protein uS9 family.

This chain is Small ribosomal subunit protein uS9 (rpsI), found in Synechocystis sp. (strain ATCC 27184 / PCC 6803 / Kazusa).